The sequence spans 159 residues: 3-hydroxyacyl-[acyl-carrier-protein] dehydratase FabZ (159 aa).

Residue histidine 58 is part of the active site.

The protein belongs to the thioester dehydratase family. FabZ subfamily.

It localises to the cytoplasm. The catalysed reaction is a (3R)-hydroxyacyl-[ACP] = a (2E)-enoyl-[ACP] + H2O. In terms of biological role, involved in unsaturated fatty acids biosynthesis. Catalyzes the dehydration of short chain beta-hydroxyacyl-ACPs and long chain saturated and unsaturated beta-hydroxyacyl-ACPs. The protein is 3-hydroxyacyl-[acyl-carrier-protein] dehydratase FabZ of Helicobacter pylori (strain Shi470).